The primary structure comprises 151 residues: UPF0735 ACT domain-containing protein SAUSA300_1599 (151 aa).

Residues 74–149 form the ACT domain; the sequence is TLILYVTDIV…YVSKVELISM (76 aa).

The protein belongs to the UPF0735 family.

The protein is UPF0735 ACT domain-containing protein SAUSA300_1599 of Staphylococcus aureus (strain USA300).